Here is a 571-residue protein sequence, read N- to C-terminus: MKAAYDCRATKRACSDRKVLILGTNWANPQSGTMEKITISIVNDKATGNKRNIEEEADESPPPKKLRSAVFLCSTPSSAPHCSRDVDVFDEFDDTILERSEDESDSPLHMTLVQIEELLEGDSDYAAEPPGWEEESDTVLQELAVPNADGSQRNIVEFRNLNSPLVEEQSDSSHTLTEETVCSQDTSNYAAMAPSPCWSSISTAEQNGEAGDNVLSVCPITSPVLHKNEVNRGSVQDCSEVCNDSDICSTLSSSHLPGDLKVVDEISEDSDIPFDGDIDELLTLSPGDTTSEDEDNKITSESTPASSELESVPLVHSHTEAIYKTPSSLQCPVTFTASTDPSNLSQLSVSSVTAINGQNNSNKVPLPPSDTAPGPQLPADPCSQSSKVLKVEPKENKVIKETGFEQGEKSCAAPLDHTVKENLGQTSKEQVVVSIGCKKKVKPSQLQQKKLGTLPTKPQAACRPQISNAELEKNRNIYRDRVMMHLEVHNIPGEPNYELATLLNETSRENPTWQHPSDYTRRNYYVRKQPVPCSLNDWVMRNGGPAIERFHGLPCTFQRSPMPGVLPTGPS.

The segment covering 270 to 280 has biased composition (acidic residues); that stretch reads SDIPFDGDIDE. Disordered regions lie at residues 270 to 312 and 356 to 385; these read SDIP…LESV and NGQNNSNKVPLPPSDTAPGPQLPADPCSQS. Residues 299 to 309 are compositionally biased toward polar residues; the sequence is TSESTPASSEL. Over residues 365–378 the composition is skewed to pro residues; that stretch reads PLPPSDTAPGPQLP.

It localises to the nucleus. The protein is S100P-binding protein (s100pbp) of Xenopus tropicalis (Western clawed frog).